The following is a 137-amino-acid chain: Sch210972 biosynthesis cluster protein E (137 aa).

Over residues 1-12 (MTKYTSVNSSLP) the composition is skewed to polar residues. Residues 1–137 (MTKYTSVNSS…ASTIRPPCCG (137 aa)) are disordered. The segment covering 15-27 (PRQTTPTRPATQT) has biased composition (low complexity). The segment covering 51-71 (GSLNGSPTLRTTLDTSLSGTR) has biased composition (polar residues). The segment covering 94 to 109 (DEDHPHDPGPDSDAKK) has biased composition (basic and acidic residues).

It functions in the pathway secondary metabolite biosynthesis. Functionally, part of the gene cluster that mediates the biosynthesis of the tetramic acid Sch210972, a potential anti-HIV fungal natural product that contains a decalin core. The PKS module of cghG together with the enoylreductase cghC catalyze the formation of the polyketide unit which is then conjugated to 4-hydroxyl-4-methyl glutamate (HMG) by the condensation domain of the cghG NRPS module. One unique structural feature of Sch210972 is the tetramic acid motif proposed to be derived from the non-proteinogenic amino acid HMG, by a Dieckmann-type condensation catalyzed by the reductase domain of cghG. The aldolase cghB catalyzes the aldol condensation of 2 molecules of pyruvic acid to yield the intermediate 4-hydroxyl-4-methyl-2-oxoglutarate (HMOG), which can then be stereoselectively transaminated by an unidentified enzyme to form HMG. The Diels-Alderase cghA then uses the Dieckmann product released by cghG as substrate and catalyzes the Diels-Alder cycloaddition to form the decalin ring of Sch210972. CghA also suppresses the nonenzymatic formation of the alternative stereoisomer. The protein is Sch210972 biosynthesis cluster protein E of Chaetomium globosum (strain ATCC 6205 / CBS 148.51 / DSM 1962 / NBRC 6347 / NRRL 1970) (Soil fungus).